Reading from the N-terminus, the 271-residue chain is Urease accessory protein UreD (271 aa).

Belongs to the UreD family. As to quaternary structure, ureD, UreF and UreG form a complex that acts as a GTP-hydrolysis-dependent molecular chaperone, activating the urease apoprotein by helping to assemble the nickel containing metallocenter of UreC. The UreE protein probably delivers the nickel.

It is found in the cytoplasm. In terms of biological role, required for maturation of urease via the functional incorporation of the urease nickel metallocenter. This chain is Urease accessory protein UreD, found in Haemophilus influenzae (strain PittEE).